The following is a 335-amino-acid chain: DNA-directed RNA polymerase subunit alpha (335 aa).

The alpha N-terminal domain (alpha-NTD) stretch occupies residues Met-1–Glu-233. Residues Ile-247–Arg-335 form an alpha C-terminal domain (alpha-CTD) region.

Belongs to the RNA polymerase alpha chain family. Homodimer. The RNAP catalytic core consists of 2 alpha, 1 beta, 1 beta' and 1 omega subunit. When a sigma factor is associated with the core the holoenzyme is formed, which can initiate transcription.

The catalysed reaction is RNA(n) + a ribonucleoside 5'-triphosphate = RNA(n+1) + diphosphate. Functionally, DNA-dependent RNA polymerase catalyzes the transcription of DNA into RNA using the four ribonucleoside triphosphates as substrates. This chain is DNA-directed RNA polymerase subunit alpha, found in Alcanivorax borkumensis (strain ATCC 700651 / DSM 11573 / NCIMB 13689 / SK2).